The chain runs to 387 residues: Exodeoxyribonuclease 7 large subunit (387 aa).

Belongs to the XseA family. Heterooligomer composed of large and small subunits.

The protein resides in the cytoplasm. It catalyses the reaction Exonucleolytic cleavage in either 5'- to 3'- or 3'- to 5'-direction to yield nucleoside 5'-phosphates.. Bidirectionally degrades single-stranded DNA into large acid-insoluble oligonucleotides, which are then degraded further into small acid-soluble oligonucleotides. This chain is Exodeoxyribonuclease 7 large subunit, found in Campylobacter jejuni subsp. jejuni serotype O:6 (strain 81116 / NCTC 11828).